The primary structure comprises 795 residues: Endoplasmin (795 aa).

The N-terminal stretch at 1-21 is a signal peptide; the sequence is MKSAWALALACTLLLAASVTA. The SRT pseudosubstrate motif signature appears at 41–43; sequence SRT. N-linked (GlcNAc...) asparagine glycans are attached at residues N61 and N106. ATP contacts are provided by N106, D148, N161, and F198. N-linked (GlcNAc...) asparagine glycosylation occurs at N216. A compositionally biased stretch (acidic residues) spans 289–316; the sequence is EEPVEEEEAKEEKEETDDNEAAVEEEEE. The segment at 289–322 is disordered; that stretch reads EEPVEEEEAKEEKEETDDNEAAVEEEEEEKKPKT. N444, N480, and N501 each carry an N-linked (GlcNAc...) asparagine glycan. The disordered stretch occupies residues 751–795; that stretch reads DAKVEEEPEEPEDAAEEAEQDEEEVDADAEDSETQKESTDVKDEL. Acidic residues predominate over residues 756-782; the sequence is EEPEEPEDAAEEAEQDEEEVDADAEDS. Basic and acidic residues predominate over residues 783–795; that stretch reads ETQKESTDVKDEL. The short motif at 792–795 is the Prevents secretion from ER element; it reads KDEL.

This sequence belongs to the heat shock protein 90 family. As to quaternary structure, homodimer; disulfide-linked.

The protein resides in the endoplasmic reticulum lumen. It localises to the sarcoplasmic reticulum lumen. It carries out the reaction ATP + H2O = ADP + phosphate + H(+). ATP-dependent chaperone involved in the processing of proteins in the endoplasmic reticulum, regulating their transport. The chain is Endoplasmin (HSP90B1) from Gallus gallus (Chicken).